Reading from the N-terminus, the 151-residue chain is 3-hydroxyacyl-[acyl-carrier-protein] dehydratase FabZ (151 aa).

The active site involves His-54.

Belongs to the thioester dehydratase family. FabZ subfamily.

Its subcellular location is the cytoplasm. It catalyses the reaction a (3R)-hydroxyacyl-[ACP] = a (2E)-enoyl-[ACP] + H2O. In terms of biological role, involved in unsaturated fatty acids biosynthesis. Catalyzes the dehydration of short chain beta-hydroxyacyl-ACPs and long chain saturated and unsaturated beta-hydroxyacyl-ACPs. This is 3-hydroxyacyl-[acyl-carrier-protein] dehydratase FabZ from Salmonella agona (strain SL483).